Here is a 523-residue protein sequence, read N- to C-terminus: 2-isopropylmalate synthase (523 aa).

The 263-residue stretch at V5–W267 folds into the Pyruvate carboxyltransferase domain. Residues D14, H202, H204, and N238 each coordinate Mn(2+). The tract at residues R392–V523 is regulatory domain.

This sequence belongs to the alpha-IPM synthase/homocitrate synthase family. LeuA type 1 subfamily. Homodimer. It depends on Mn(2+) as a cofactor.

Its subcellular location is the cytoplasm. The catalysed reaction is 3-methyl-2-oxobutanoate + acetyl-CoA + H2O = (2S)-2-isopropylmalate + CoA + H(+). The protein operates within amino-acid biosynthesis; L-leucine biosynthesis; L-leucine from 3-methyl-2-oxobutanoate: step 1/4. Functionally, catalyzes the condensation of the acetyl group of acetyl-CoA with 3-methyl-2-oxobutanoate (2-ketoisovalerate) to form 3-carboxy-3-hydroxy-4-methylpentanoate (2-isopropylmalate). The polypeptide is 2-isopropylmalate synthase (Shigella flexneri).